The following is a 324-amino-acid chain: tRNA N6-adenosine threonylcarbamoyltransferase (324 aa).

Fe cation-binding residues include histidine 107, histidine 111, and tyrosine 127. Substrate-binding positions include 127–131, aspartate 159, glycine 172, glutamate 176, and asparagine 257; that span reads YVSGG. Fe cation is bound at residue aspartate 285.

The protein belongs to the KAE1 / TsaD family. As to quaternary structure, monomer. Component of the KEOPS complex that consists of Kae1, Bud32, Cgi121 and Pcc1; the whole complex dimerizes. The cofactor is Fe(2+).

It localises to the cytoplasm. The enzyme catalyses L-threonylcarbamoyladenylate + adenosine(37) in tRNA = N(6)-L-threonylcarbamoyladenosine(37) in tRNA + AMP + H(+). Its function is as follows. Required for the formation of a threonylcarbamoyl group on adenosine at position 37 (t(6)A37) in tRNAs that read codons beginning with adenine. Is a component of the KEOPS complex that is probably involved in the transfer of the threonylcarbamoyl moiety of threonylcarbamoyl-AMP (TC-AMP) to the N6 group of A37. Kae1 likely plays a direct catalytic role in this reaction, but requires other protein(s) of the complex to fulfill this activity. This chain is tRNA N6-adenosine threonylcarbamoyltransferase, found in Pyrococcus furiosus (strain ATCC 43587 / DSM 3638 / JCM 8422 / Vc1).